The chain runs to 800 residues: Internalin A (800 aa).

An N-terminal signal peptide occupies residues 1–35; it reads MRKKRYVWLKSILVAILVFGSGVWINTSNGTNAQA. Positions 36-76 constitute an LRRNT domain; the sequence is ATITQDTPINQIFTDTALAEKMKTVLGKTNVTDTVSQTDLD. LRR repeat units follow at residues 77 to 98, 99 to 120, 121 to 142, 143 to 164, 165 to 186, 187 to 207, 208 to 229, 230 to 251, 252 to 273, 274 to 295, 296 to 317, 318 to 339, 340 to 361, 362 to 383, and 384 to 405; these read QVTTLQADRLGIKSIDGVEYLN, NLTQINFSNNQLTDITPLKNLT, KLVDILMNNNQIADITPLANLT, NLTGLTLFNNQITDIDPLKNLT, NLNRLELSSNTISDISALSGLT, SLQQLSFGNQVTDLKPLANLT, TLERLDISSNKVSDISVLAKLT, NLESLIATNNQISDITPLGILT, NLDELSLNGNQLKDIGTLASLT, NLTDLDLANNQISNLAPLSGLT, KLTELKLGANQISNISPLAGLT, ALTNLELNENQLEDISPISNLK, NLTYLTLYFNNISDISPVSSLT, KLQRLFFYNNKVSDVSSLANLT, and NINWLSAGHNQISDLTPLANLT. The region spanning 416-505 is the LRRCT domain; that stretch reads AWTNAPVNYK…AIFNVKFHVD (90 aa). The B-1 repeat unit spans residues 518–587; sequence LLTEPAKPVK…TTSQTVDYQG (70 aa). A 3 X approximate tandem repeats, type B region spans residues 518–706; it reads LLTEPAKPVK…ITLYAQFTKN (189 aa). The stretch at 588 to 657 is one B-2 repeat; sequence LLQEPTAPTK…STTQAVDYQG (70 aa). A B-3 repeat occupies 658 to 706; it reads LLKEPKAPTKAGYTFKGWYDEKTDGKKWDFATDKMPANDITLYAQFTKN. Residues 705-757 form a disordered region; that stretch reads KNPVAPPTTGGNTPPTTNNGGNTTPPSANIPGSDTSNTSTGNSASTTSTMNAY. Residues 711 to 753 are compositionally biased toward low complexity; it reads PTTGGNTPPTTNNGGNTTPPSANIPGSDTSNTSTGNSASTTST. Positions 767 to 771 match the LPXTG sorting signal motif; that stretch reads LPTTG. T770 is subject to Pentaglycyl murein peptidoglycan amidated threonine. The propeptide at 771–800 is removed by sortase A; that stretch reads GDSDNALYLLLGLLAVGTAMALTKKARASK.

This sequence belongs to the internalin family. Interacts with host (human) cadherin-1 (CDH1). The formation of the complex between inlA and cadherin-1 is calcium-dependent. Mutagenesis studies show it is possible to increase the affinity of InlA for CDH1 by rational engineering of InlA residues.

It localises to the secreted. The protein resides in the cell wall. Bacterial uptake is inhibited by EDTA and by anti-E-cadherin antibodies. Functionally, mediates the entry of L.monocytogenes into host intestinal epithelial cells; transformation with inlA alone allows L.innocua (a non-invasive species) to be taken up by host cells. Binds to human receptor cadherin-1 (E-cadherin, CDH1); the chicken homolog of cadherin-1 but not cadherin-2 function as receptors. Mouse cadherin-1 is not a receptor, however mutating a single surface-exposed residue (Glu-172 to Pro in mouse) allows cadherin-1 to act as a receptor for InlA. The sequence is that of Internalin A from Listeria monocytogenes serovar 1/2a (strain ATCC BAA-679 / EGD-e).